Reading from the N-terminus, the 337-residue chain is Glutaredoxin-3 (337 aa).

N-acetylalanine is present on Ala-2. A Thioredoxin domain is found at 2-119 (AAGAAEAGEA…LTKKVQRHVS (118 aa)). Ser-119 is subject to Phosphoserine. 2 consecutive Glutaredoxin domains span residues 144–238 (HAAP…PKLE) and 239–337 (ERLK…KGEN). 2 residues coordinate [2Fe-2S] cluster: Cys-161 and Cys-263.

Homodimer; the homodimer is independent of 2Fe-2S clusters. Heterotrimer; forms a heterotrimeric complex composed by two BOLA2 molecules and one GLRX3 molecule; linked by [2Fe-2S] clusters. Interacts (via N-terminus) with PRKCQ/PKC-theta. Interacts (via C-terminus) with CSRP3. Interacts with CSRP2.

It localises to the cytoplasm. The protein resides in the cytosol. Its subcellular location is the cell cortex. The protein localises to the myofibril. It is found in the sarcomere. It localises to the z line. Functionally, together with BOLA2, acts as a cytosolic iron-sulfur (Fe-S) cluster assembly factor that facilitates [2Fe-2S] cluster insertion into a subset of cytosolic proteins. Acts as a critical negative regulator of cardiac hypertrophy and a positive inotropic regulator. Required for hemoglobin maturation. Does not possess any thyoredoxin activity since it lacks the conserved motif that is essential for catalytic activity. The protein is Glutaredoxin-3 (Glrx3) of Mus musculus (Mouse).